The following is a 338-amino-acid chain: Holliday junction branch migration complex subunit RuvB (338 aa).

A large ATPase domain (RuvB-L) region spans residues 1–180 (MTRLVTPDIT…FGVISRLEFY (180 aa)). ATP is bound by residues Leu-19, Arg-20, Gly-61, Lys-64, Thr-65, Thr-66, 127-129 (EDY), Arg-170, Tyr-180, and Arg-217. Thr-65 serves as a coordination point for Mg(2+). The segment at 181–251 (TDDELTTIVT…VVDESLKLLE (71 aa)) is small ATPAse domain (RuvB-S). A head domain (RuvB-H) region spans residues 254–338 (EKGFDHMDRT…PPSSSQGNLF (85 aa)). Residues Arg-290, Arg-309, and Arg-314 each coordinate DNA.

This sequence belongs to the RuvB family. Homohexamer. Forms an RuvA(8)-RuvB(12)-Holliday junction (HJ) complex. HJ DNA is sandwiched between 2 RuvA tetramers; dsDNA enters through RuvA and exits via RuvB. An RuvB hexamer assembles on each DNA strand where it exits the tetramer. Each RuvB hexamer is contacted by two RuvA subunits (via domain III) on 2 adjacent RuvB subunits; this complex drives branch migration. In the full resolvosome a probable DNA-RuvA(4)-RuvB(12)-RuvC(2) complex forms which resolves the HJ.

Its subcellular location is the cytoplasm. The catalysed reaction is ATP + H2O = ADP + phosphate + H(+). The RuvA-RuvB-RuvC complex processes Holliday junction (HJ) DNA during genetic recombination and DNA repair, while the RuvA-RuvB complex plays an important role in the rescue of blocked DNA replication forks via replication fork reversal (RFR). RuvA specifically binds to HJ cruciform DNA, conferring on it an open structure. The RuvB hexamer acts as an ATP-dependent pump, pulling dsDNA into and through the RuvAB complex. RuvB forms 2 homohexamers on either side of HJ DNA bound by 1 or 2 RuvA tetramers; 4 subunits per hexamer contact DNA at a time. Coordinated motions by a converter formed by DNA-disengaged RuvB subunits stimulates ATP hydrolysis and nucleotide exchange. Immobilization of the converter enables RuvB to convert the ATP-contained energy into a lever motion, pulling 2 nucleotides of DNA out of the RuvA tetramer per ATP hydrolyzed, thus driving DNA branch migration. The RuvB motors rotate together with the DNA substrate, which together with the progressing nucleotide cycle form the mechanistic basis for DNA recombination by continuous HJ branch migration. Branch migration allows RuvC to scan DNA until it finds its consensus sequence, where it cleaves and resolves cruciform DNA. The chain is Holliday junction branch migration complex subunit RuvB from Geobacter metallireducens (strain ATCC 53774 / DSM 7210 / GS-15).